Reading from the N-terminus, the 592-residue chain is Glutamine-rich protein 2 (592 aa).

Residues 488–592 (QLQQAQHARP…TRGPRSTAAH (105 aa)) form a disordered region. The span at 544-567 (LQSNVSHSSIPTDIASLQGSQQGL) shows a compositional bias: polar residues.

As to quaternary structure, interacts with AKAP3, ODF2 and TSSK4. Interacts with AKAP4. As to expression, expressed in testis. Not detected in heart, brain, kidney, stomach, ovary, liver, lung and uterus.

It localises to the nucleus membrane. The protein resides in the nucleus. The protein localises to the cytoplasm. It is found in the cell projection. Its subcellular location is the cilium. It localises to the flagellum. Functionally, has an essential role in the formation of sperm flagella and flagellar structure maintainance. It acts as a suppressor of ubiquitination and degradation of proteins involved in flagellar development and motility. In Mus musculus (Mouse), this protein is Glutamine-rich protein 2.